The primary structure comprises 427 residues: Glutamyl-tRNA reductase (427 aa).

Residues 50–53 (TCNR), Ser110, 115–117 (ETQ), and Gln121 each bind substrate. Cys51 acts as the Nucleophile in catalysis. 190–195 (GAGEMG) contacts NADP(+).

This sequence belongs to the glutamyl-tRNA reductase family. Homodimer.

It carries out the reaction (S)-4-amino-5-oxopentanoate + tRNA(Glu) + NADP(+) = L-glutamyl-tRNA(Glu) + NADPH + H(+). It functions in the pathway porphyrin-containing compound metabolism; protoporphyrin-IX biosynthesis; 5-aminolevulinate from L-glutamyl-tRNA(Glu): step 1/2. Catalyzes the NADPH-dependent reduction of glutamyl-tRNA(Glu) to glutamate 1-semialdehyde (GSA). The protein is Glutamyl-tRNA reductase of Campylobacter concisus (strain 13826).